Consider the following 1416-residue polypeptide: MKDLLRFFKIQHTQIEEFNAIKIALASPDMIRSWSFGEVKKPETINYRTFKPERDGLFCARIFGPIKDYECLCGKYKRLKHRGVVCEKCGVEVTQSKVRRERMGHIELASPTAHIWFLKSLPSRIGLLLDMPLRDIERVLYFESYVVVESGMTSLECRQVLTEEEYLDALEEFGDEFEAKMGAEAIQILLRNTNLKNECEYLREILEDSHSETKRKKITKRIKLIEAFIYSENKPEWMVLNVLPVLPPDLRPLVPLDGGRFATSDLNDLYRRVINRNNRLKRLLDLAAPEIIVRNEKRMLQEAVDALLDNGRRGRAITGSNKRPLKSLADMIKGKQGRFRQNLLGKRVDYSGRSVITVGPYLKLHQCGLPKKMALELFKPFIYGKLELQGFASTIKAAKKMVDREEAVVWDILDNVIREHPVMLNRAPTLHRLGIQAFEPVLIEGKAIQLHPLVCAAYNADFDGDQMAVHVPLTLEAQLEARALMMSTNNILSPANGEPIIVPSQDVVLGLYYMTRERSNAKGEGMVLTGPKEAECLYRLGLADLHARIKIRITEYEYDKNGEWSKKTNLVNSTIGRSILWMIVPKGLPFILVNQVLGKKAISTMLNNCYRLLGMKATVILADQIMYTGFAYAARSGASVGIDDMMIPSKKADIIDEAESEVVEIQEQFQTGLVTAGERYNKVIDIWAAANERVAQAMMDNLATETVMNRNGQLENQASFNNIFMMADSGARGSAAQIRQLAGMRGLMAKPDGSIIETPITANFREGLNVLQYFISTHGARKGLADTALKTANSGYLTRRLVDVAQDLVITQDDCDTFSGIVMSPVIEGGDVKEPLRERVLGRVLAEDILESNADTDSKVLIVRNTLLDEYWCDVLDEHSIDTVKVRSVVTCDTDFGVCSKCYGRDLARGQIVNKGEAIGVIAAQSIGEPGTQLTMRTFHIGGAASRSALESSIQIKNTGTVCLKNIKSVINGEGKLVVISRNTELKIIDQFSRTKESYKVPYGAVITKKNEEKVIHGEIVAYWDPHTMPVIAEVSGFIQFIDLIDGQSIVKQTDELTGLTSIVVLDTSERVSSAKDLRPTLKIVDINGYDIFIPGTDVPVQYFLPGRSVVQLVDGSRIICGDILARLPHESSGTKDITGGLPRVADLFEARRPKESAILAEISGTISFGKETKGKRRLMISPIEDGDVYEEMIPKWRHLNVFEGEYVDRGDIISDGPESPHDILRLRGVHAVTRYIVNEVQDVYRLQGVKINDKHIEVIVRQMLRKATVIRSGSSDFLVGEQVEYSRIKIANRKLENEGKVKISFIRNLLGITKASLATESFISAASFQETTRVLTESSVAGKRDELRGLKENVIVGRLIPAGTGYSYHQERVHHRHFSNKKETEKSVITNISSQITADEASANLTELLNATSPK.

Zn(2+) is bound by residues Cys-71, Cys-73, Cys-86, and Cys-89. Residues Asp-461, Asp-463, and Asp-465 each coordinate Mg(2+). Positions 815, 892, 899, and 902 each coordinate Zn(2+).

It belongs to the RNA polymerase beta' chain family. In terms of assembly, the RNAP catalytic core consists of 2 alpha, 1 beta, 1 beta' and 1 omega subunit. When a sigma factor is associated with the core the holoenzyme is formed, which can initiate transcription. The cofactor is Mg(2+). It depends on Zn(2+) as a cofactor.

It catalyses the reaction RNA(n) + a ribonucleoside 5'-triphosphate = RNA(n+1) + diphosphate. Functionally, DNA-dependent RNA polymerase catalyzes the transcription of DNA into RNA using the four ribonucleoside triphosphates as substrates. In Blochmanniella pennsylvanica (strain BPEN), this protein is DNA-directed RNA polymerase subunit beta'.